A 164-amino-acid polypeptide reads, in one-letter code: ATP synthase subunit b (164 aa).

Residues 6–26 (GELVGNFILVTGSVIVLLLLI) form a helical membrane-spanning segment.

This sequence belongs to the ATPase B chain family. As to quaternary structure, F-type ATPases have 2 components, F(1) - the catalytic core - and F(0) - the membrane proton channel. F(1) has five subunits: alpha(3), beta(3), gamma(1), delta(1), epsilon(1). F(0) has three main subunits: a(1), b(2) and c(10-14). The alpha and beta chains form an alternating ring which encloses part of the gamma chain. F(1) is attached to F(0) by a central stalk formed by the gamma and epsilon chains, while a peripheral stalk is formed by the delta and b chains.

Its subcellular location is the cell membrane. In terms of biological role, f(1)F(0) ATP synthase produces ATP from ADP in the presence of a proton or sodium gradient. F-type ATPases consist of two structural domains, F(1) containing the extramembraneous catalytic core and F(0) containing the membrane proton channel, linked together by a central stalk and a peripheral stalk. During catalysis, ATP synthesis in the catalytic domain of F(1) is coupled via a rotary mechanism of the central stalk subunits to proton translocation. Functionally, component of the F(0) channel, it forms part of the peripheral stalk, linking F(1) to F(0). The sequence is that of ATP synthase subunit b from Streptococcus pyogenes serotype M12 (strain MGAS2096).